Consider the following 222-residue polypeptide: Cytidylate kinase (222 aa).

11-19 is a binding site for ATP; the sequence is GPSGSGKST.

The protein belongs to the cytidylate kinase family. Type 1 subfamily.

The protein resides in the cytoplasm. It carries out the reaction CMP + ATP = CDP + ADP. The enzyme catalyses dCMP + ATP = dCDP + ADP. The sequence is that of Cytidylate kinase from Ureaplasma urealyticum serovar 10 (strain ATCC 33699 / Western).